A 428-amino-acid chain; its full sequence is Succinyl-CoA--L-malate CoA-transferase alpha subunit (428 aa).

A disordered region spans residues 1–31 (MPPTGEEPSGHAESKPPASDPMSTPGTGQEQ). A compositionally biased stretch (polar residues) spans 21–31 (PMSTPGTGQEQ). Asp200 acts as the Nucleophile in catalysis.

The protein belongs to the CoA-transferase III family. In terms of assembly, forms a large complex composed of six heterodimers (alpha, beta).

The enzyme catalyses succinyl-CoA + (S)-malate = (S)-malyl-CoA + succinate. The catalysed reaction is (3S)-citramalate + succinyl-CoA = (3S)-citramalyl-CoA + succinate. Its function is as follows. Involved in the 3-hydroxypropionate cycle used for autotrophic carbon dioxide fixation. Catalyzes the transfer of CoA moiety from succinyl-CoA to L-malate to yield L-malyl-CoA. It is highly specific for succinyl-CoA as the CoA donor, however it can accept L-citramalate instead of L-malate as the CoA acceptor. The chain is Succinyl-CoA--L-malate CoA-transferase alpha subunit (smtA) from Chloroflexus aurantiacus.